The sequence spans 56 residues: U4-myrmicitoxin-Tb1a (56 aa).

The N-terminal stretch at 1–26 is a signal peptide; the sequence is MQPSYLLLTFAIIFVMVIMYSPAVEA. Residues 27–40 constitute a propeptide that is removed on maturation; that stretch reads KAGADADADAHADA. Glycine 53 bears the Glycine amide mark.

Post-translationally, contains 1 disulfide bond. Expressed by the venom gland.

It localises to the secreted. In terms of biological role, venom protein with unknown function. Does not induce paralysis when a high dose is administered by intrathoracic injection into the blowfly Lucilia caesar. This chain is U4-myrmicitoxin-Tb1a, found in Tetramorium bicarinatum (Tramp ant).